A 545-amino-acid polypeptide reads, in one-letter code: CTP synthase (545 aa).

Residues 1–266 are amidoligase domain; it reads MATNYIFVTG…DTFVCDRFRL (266 aa). Residue Ser-14 participates in CTP binding. Residue Ser-14 coordinates UTP. Residues 15-20 and Asp-72 each bind ATP; that span reads SLGKGI. 2 residues coordinate Mg(2+): Asp-72 and Glu-140. CTP-binding positions include 147 to 149, 187 to 192, and Lys-223; these read DIE and KTKPTQ. Residues 187 to 192 and Lys-223 each bind UTP; that span reads KTKPTQ. 239 to 241 contacts ATP; that stretch reads KDV. Positions 291–542 constitute a Glutamine amidotransferase type-1 domain; that stretch reads TIGMVGKYVE…VAAAKAYQDS (252 aa). Position 352 (Gly-352) interacts with L-glutamine. Catalysis depends on Cys-379, which acts as the Nucleophile; for glutamine hydrolysis. Residues 380–383, Glu-403, and Arg-470 each bind L-glutamine; that span reads LGMQ. Active-site residues include His-515 and Glu-517.

This sequence belongs to the CTP synthase family. As to quaternary structure, homotetramer.

It catalyses the reaction UTP + L-glutamine + ATP + H2O = CTP + L-glutamate + ADP + phosphate + 2 H(+). The catalysed reaction is L-glutamine + H2O = L-glutamate + NH4(+). It carries out the reaction UTP + NH4(+) + ATP = CTP + ADP + phosphate + 2 H(+). The protein operates within pyrimidine metabolism; CTP biosynthesis via de novo pathway; CTP from UDP: step 2/2. Allosterically activated by GTP, when glutamine is the substrate; GTP has no effect on the reaction when ammonia is the substrate. The allosteric effector GTP functions by stabilizing the protein conformation that binds the tetrahedral intermediate(s) formed during glutamine hydrolysis. Inhibited by the product CTP, via allosteric rather than competitive inhibition. Catalyzes the ATP-dependent amination of UTP to CTP with either L-glutamine or ammonia as the source of nitrogen. Regulates intracellular CTP levels through interactions with the four ribonucleotide triphosphates. This is CTP synthase from Actinobacillus pleuropneumoniae serotype 5b (strain L20).